The chain runs to 269 residues: Phosphatidylglycerol--prolipoprotein diacylglyceryl transferase (269 aa).

3 helical membrane-spanning segments follow: residues 21-41, 54-74, and 88-108; these read WYGI…VLEG, LLLY…VVFE, and IWDG…VILI. An a 1,2-diacyl-sn-glycero-3-phospho-(1'-sn-glycerol)-binding site is contributed by Arg-136. The next 2 membrane-spanning stretches (helical) occupy residues 206 to 226 and 236 to 256; these read GEVV…IEGM and LRVS…AIFY.

The protein belongs to the Lgt family.

It localises to the cell membrane. The catalysed reaction is L-cysteinyl-[prolipoprotein] + a 1,2-diacyl-sn-glycero-3-phospho-(1'-sn-glycerol) = an S-1,2-diacyl-sn-glyceryl-L-cysteinyl-[prolipoprotein] + sn-glycerol 1-phosphate + H(+). Its pathway is protein modification; lipoprotein biosynthesis (diacylglyceryl transfer). Its function is as follows. Catalyzes the transfer of the diacylglyceryl group from phosphatidylglycerol to the sulfhydryl group of the N-terminal cysteine of a prolipoprotein, the first step in the formation of mature lipoproteins. This chain is Phosphatidylglycerol--prolipoprotein diacylglyceryl transferase, found in Ligilactobacillus salivarius (strain UCC118) (Lactobacillus salivarius).